Here is a 638-residue protein sequence, read N- to C-terminus: Signal recognition particle receptor subunit alpha (638 aa).

2 disordered regions span residues 132-244 (APTT…GKKA) and 283-316 (GTGS…TKGT). 2 stretches are compositionally biased toward basic and acidic residues: residues 137-146 (KKFEDSEKAK) and 153-165 (IETR…EKAK). Phosphoserine is present on S177. The segment covering 204-239 (LSKEELIRRKREEFIQKHGRGMEKSNKSTKSDAPKE) has biased composition (basic and acidic residues). T284 is modified (phosphothreonine). Residues S296, S297, and S298 each carry the phosphoserine modification. Over residues 304–314 (AQNSTKPSATK) the composition is skewed to polar residues. The segment at 419–636 (YVVTFCGVNG…NAKAVVAALM (218 aa)) is NG domain. Residue 425–432 (GVNGVGKS) participates in GTP binding. Phosphoserine is present on S473. 520–524 (DTAGR) provides a ligand contact to GTP. T578 is subject to Phosphothreonine. 588-591 (TKFD) is a GTP binding site.

This sequence belongs to the GTP-binding SRP family. As to quaternary structure, heterodimer with SRPRB. Interacts with the signal recognition particle (SRP) complex subunit SRP54. (Microbial infection) May interact with Zika virus strain Mr-766 non-structural protein 4A/NS4A. May interact with Zika virus French Polynesia 10087PF/2013 non-structural protein 4A/NS4A. In terms of assembly, (Microbial infection) May interact with Dengue virus DENV2 16681 non-structural protein 4A/NS4A.

The protein localises to the endoplasmic reticulum membrane. Functionally, component of the signal recognition particle (SRP) complex receptor (SR). Ensures, in conjunction with the SRP complex, the correct targeting of the nascent secretory proteins to the endoplasmic reticulum membrane system. Forms a guanosine 5'-triphosphate (GTP)-dependent complex with the SRP subunit SRP54. SRP receptor compaction and GTPase rearrangement drive SRP-mediated cotranslational protein translocation into the ER. The protein is Signal recognition particle receptor subunit alpha of Homo sapiens (Human).